We begin with the raw amino-acid sequence, 602 residues long: CDPK-related protein kinase (602 aa).

The segment at 1–59 (MGICVSKPSPEPDLHNHHTSIPVNDTSLPPQDNSIPPKDIAIPAQDNNKPPGKKSPFLP) is disordered. Over residues 19 to 34 (TSIPVNDTSLPPQDNS) the composition is skewed to polar residues. Repeat copies occupy residues 20-26 (SIPVNDT), 27-33 (SLPPQDN), and 34-40 (SIPPKDI). Residues 20–40 (SIPVNDTSLPPQDNSIPPKDI) are 3 X 7 AA tandem repeats of S-[LI]-P-X-X-D-X. The Protein kinase domain occupies 148 to 410 (FEVGEEVGRG…AAQALCHSWI (263 aa)). ATP-binding positions include 154-162 (VGRGHFGYT) and K180. D276 serves as the catalytic Proton acceptor. EF-hand domains are found at residues 451–486 (VDEL…RNST), 487–527 (DAMK…LEAL), 528–563 (DRWE…LGPS), and 564–602 (IPVH…AKAQ).

It belongs to the protein kinase superfamily. CAMK Ser/Thr protein kinase family. CaMK subfamily.

The enzyme catalyses L-seryl-[protein] + ATP = O-phospho-L-seryl-[protein] + ADP + H(+). It catalyses the reaction L-threonyl-[protein] + ATP = O-phospho-L-threonyl-[protein] + ADP + H(+). The sequence is that of CDPK-related protein kinase (CRK) from Daucus carota (Wild carrot).